A 164-amino-acid chain; its full sequence is Kunitz-type serine protease inhibitor BbKI (164 aa).

Belongs to the protease inhibitor I3 (leguminous Kunitz-type inhibitor) family. Monomer.

The protein localises to the secreted. Inhibits bovine trypsin, human plasma kallikrein and plasmin and weakly bovine chymotrypsin. In Bauhinia bauhinioides (Perlebia bauhinoides), this protein is Kunitz-type serine protease inhibitor BbKI.